Reading from the N-terminus, the 605-residue chain is MSRFKRGGKAPDPLSGFRAPKEQESAVPFGLIKAARKSGQLNLSARGLTEVPVSVWRINVDTPPEAHQNVDFGGSDRWWEQTDLTKLILASNKLQALSEDISLLPALVVLDIHDNQIASLPCAIRELTNLQKLNISHNKIKQLPNELQHLQNLKSFLLQHNQLEELPDSIGHLSILEELDVSNNCLRSVSSSVGQLTGLVKFNLSSNKLTALPTEIGKMKNLRQLDCTSNLLENVPASVAGMESLEQLYLRQNKLTYLPELPFLTKLKELHVGNNQIQTLGPEHLQNLSSLSVLELRYNKLKVLPKEISLLKGLERLDLSNNDIGSLPDTLGSLPNLKSLQLDGNPLRGIRRDILNKGTQELLKYLKGRVQTPDMTTQEAANPPDTAMTLPSDSVINAHAIMTLKTLEYCEKQASLIPEAVFNAAASSPITTVNFSKNQLTEVPARIVEMKDSVYDVNLGFNKISSISLNLCMLLKLTHLDMRNNALASLPPEMEALTRLQSIILSFNRFKHFPDVLYTIPNLETILISSNQIGSIDPIQLKKMTKLSTLDLQNNDLLQIPPALGNCESLRALHLEGNPFRNPRATILAKGTVAILEYLRSRIPT.

The segment at 1-21 (MSRFKRGGKAPDPLSGFRAPK) is disordered. LRR repeat units lie at residues 83–104 (DLTK…ISLL), 106–127 (ALVV…IREL), 129–151 (NLQK…QHLQ), 152–173 (NLKS…IGHL), 175–196 (ILEE…VGQL), 198–219 (GLVK…IGKM), 221–242 (NLRQ…VAGM), 244–265 (SLEQ…PFLT), 266–287 (KLKE…HLQN), 290–311 (SLSV…ISLL), 313–335 (GLER…GSLP), 336–357 (NLKS…ILNK), 429–450 (PITT…IVEM), 453–475 (SVYD…CMLL), 476–497 (KLTH…MEAL), 499–520 (RLQS…LYTI), 522–543 (NLET…QLKK), 546–567 (KLST…LGNC), and 569–590 (SLRA…ILAK).

The sequence is that of Leucine-rich repeat-containing protein 40 (lrrc40) from Xenopus laevis (African clawed frog).